A 300-amino-acid chain; its full sequence is Probable mitochondrial 2-oxodicarboxylate carrier (300 aa).

Positions 1–20 are disordered; it reads MTSKGNAGNPPTPTPAPVKS. Solcar repeat units lie at residues 21-104, 114-200, and 209-295; these read QPLW…YEKQ, PTQM…IKSA, and GVLV…VMKL. 6 consecutive transmembrane segments (helical) span residues 27-47, 74-93, 120-140, 171-191, 209-229, and 278-298; these read LVSG…LDVV, LKMY…KRAI, IGSG…FELV, GFFK…GGYF, GVLV…TMLN, and LGPG…LLAG.

The protein belongs to the mitochondrial carrier (TC 2.A.29) family.

It is found in the mitochondrion inner membrane. It catalyses the reaction 2-oxoadipate(in) + 2-oxoglutarate(out) = 2-oxoadipate(out) + 2-oxoglutarate(in). The catalysed reaction is hexanedioate(in) + 2-oxoglutarate(out) = hexanedioate(out) + 2-oxoglutarate(in). It carries out the reaction L-2-aminoadipate(in) + 2-oxoglutarate(out) = L-2-aminoadipate(out) + 2-oxoglutarate(in). The enzyme catalyses glutarate(in) + 2-oxoglutarate(out) = glutarate(out) + 2-oxoglutarate(in). It catalyses the reaction 2-oxoheptanedioate(in) + 2-oxoglutarate(out) = 2-oxoheptanedioate(out) + 2-oxoglutarate(in). The catalysed reaction is heptanedioate(in) + 2-oxoglutarate(out) = heptanedioate(out) + 2-oxoglutarate(in). It carries out the reaction citrate(in) + 2-oxoglutarate(out) = citrate(out) + 2-oxoglutarate(in). Transports dicarboxylates across the inner membranes of mitochondria by a counter-exchange mechanism. Can transport 2-oxoadipate (2-oxohexanedioate), 2-oxoglutarate, adipate (hexanedioate), glutarate, and to a lesser extent, pimelate (heptanedioate), 2-oxopimelate (2-oxoheptanedioate), 2-aminoadipate (2-aminohexanedioate), oxaloacetate, and citrate. Plays a central role in catabolism of lysine, hydroxylysine, and tryptophan, by transporting common metabolite intermediates (such as 2-oxoadipate) into the mitochondria, where it is converted into acetyl-CoA and can enter the citric acid (TCA) cycle. This Dictyostelium discoideum (Social amoeba) protein is Probable mitochondrial 2-oxodicarboxylate carrier (mcfT).